A 130-amino-acid chain; its full sequence is Protein NrdI (130 aa).

This sequence belongs to the NrdI family.

Functionally, probably involved in ribonucleotide reductase function. In Bartonella bacilliformis (strain ATCC 35685 / KC583 / Herrer 020/F12,63), this protein is Protein NrdI.